We begin with the raw amino-acid sequence, 249 residues long: uncharacterized protein (249 aa).

The protein resides in the cytoplasm. The protein localises to the nucleus. Its subcellular location is the nucleolus. This is an uncharacterized protein from Schizosaccharomyces pombe (strain 972 / ATCC 24843) (Fission yeast).